The following is an 890-amino-acid chain: Translation initiation factor IF-2 (890 aa).

The segment at 45-302 (LIDHLNQKNS…SSLQQGFQKP (258 aa)) is disordered. The segment covering 67 to 81 (STLNIPSTGGKSKSV) has biased composition (polar residues). The span at 92–217 (VKRDPQEAER…RMAEENKWTD (126 aa)) shows a compositional bias: basic and acidic residues. Positions 252 to 266 (GRGRNAKAARPKKGN) are enriched in basic residues. Residues 267–280 (KHAESKADREEARA) show a composition bias toward basic and acidic residues. The region spanning 389–558 (PRAPVVTIMG…LLQAEVLELK (170 aa)) is the tr-type G domain. The tract at residues 398–405 (GHVDHGKT) is G1. 398–405 (GHVDHGKT) lines the GTP pocket. The interval 423–427 (GITQH) is G2. Residues 444–447 (DTPG) are G3. GTP is bound by residues 444-448 (DTPGH) and 498-501 (NKID). The tract at residues 498-501 (NKID) is G4. Positions 534-536 (SAK) are G5. Lysine 808 is modified (N6-acetyllysine).

It belongs to the TRAFAC class translation factor GTPase superfamily. Classic translation factor GTPase family. IF-2 subfamily.

The protein localises to the cytoplasm. In terms of biological role, one of the essential components for the initiation of protein synthesis. Protects formylmethionyl-tRNA from spontaneous hydrolysis and promotes its binding to the 30S ribosomal subunits. Also involved in the hydrolysis of GTP during the formation of the 70S ribosomal complex. This Shigella dysenteriae serotype 1 (strain Sd197) protein is Translation initiation factor IF-2.